The following is a 302-amino-acid chain: MLLFKLIVCFFFIFAIGANENKKDETSGENEPSENADVNSEASVVKEAFKKPASRKVNVKPPAAKPPAASKITKPQVPPQKKPPAPKQTTTKKPLLANIEGKIKGAANETTKYLTNLAKEMGKEAESALKEKAKEALTGLLDKADINGAFNAIASIWKNNENKPARYWKCAVENLSEETLVALGTTPYSGNVKTVLSDIPPQSTGVFVWESDSALTGAAGVVHYQLGDKILNIMASDPYDWTLYGAWANVRVSDNKETFDNLYSGKNGAQYPTKAGNWGIADGVKFFLTNNKEAEFQVIFSG.

The N-terminal stretch at 1-17 (MLLFKLIVCFFFIFAIG) is a signal peptide. The disordered stretch occupies residues 22 to 93 (KKDETSGENE…PAPKQTTTKK (72 aa)). Positions 60–75 (KPPAAKPPAASKITKP) are enriched in low complexity. Pro residues predominate over residues 76-86 (QVPPQKKPPAP). A Cell attachment site motif is present at residues 274 to 276 (KAG).

Belongs to the actinoporin family. HALT subfamily. In terms of assembly, octamer or nonamer in membranes. Monomer in the soluble state. In vitro, interacts with folate receptor alpha (of target organism).

The protein localises to the nematocyst. The protein resides in the secreted. It localises to the target cell membrane. Its function is as follows. Pore-forming protein that forms hydrophilic pores and causes cytolysis. Compared to equinatoxin-2 (AC P61914), it reveals lower cytolysis activity (5-12-fold difference, tested on erythrocytes), a larger pore size (probably 2-3 nm) and different affinity to membrane lipids (100-fold lower affinity to sphingomyelin). Binds to sulfatides. Shows cytolytic activity on HeLa cells, with a different potency than its paralogs (from most potent to less potent: HALT-4&gt;HALT-6~HALT-1&gt;HALT-3&gt;HALT-7&gt;HALT-2). This recombinant protein has the highest cytolytic activity compared to other rHALT proteins, probably due to its longer N-terminal sequence that may penetrate the lipid bilayer more effectively. Pore formation is a multi-step process that involves specific recognition of membrane lipid by a protein aromatic residues rich region, firm binding to the membrane (mainly driven by hydrophobic interactions) accompanied by the transfer of the N-terminal region to the lipid-water interface and finally pore formation after oligomerization of monomers. In vitro, binds to the folate receptor alpha (FOLR1), a GPI-anchored membrane protein that plays a major role in the uptake of folate/folic acid into cells via endocytosis, suggesting a possible involvement of this receptor in the mechanism of HALT-1-induced cell lysis. In vivo, does not cause visible paralysis in larvae of the blowfly Sarcophaga faculata, the most common arthropod prey of Hydra. The polypeptide is Hydra actinoporin-like toxin 4 (Hydra vulgaris (Hydra)).